Consider the following 555-residue polypeptide: Arginine--tRNA ligase (555 aa).

Positions 117-127 (ANPNGPLHVGH) match the 'HIGH' region motif.

It belongs to the class-I aminoacyl-tRNA synthetase family.

It is found in the cytoplasm. It catalyses the reaction tRNA(Arg) + L-arginine + ATP = L-arginyl-tRNA(Arg) + AMP + diphosphate. The chain is Arginine--tRNA ligase from Methanospirillum hungatei JF-1 (strain ATCC 27890 / DSM 864 / NBRC 100397 / JF-1).